Consider the following 318-residue polypeptide: Transaldolase (318 aa).

Lys132 acts as the Schiff-base intermediate with substrate in catalysis.

The protein belongs to the transaldolase family. Type 1 subfamily. Homodimer.

It localises to the cytoplasm. It catalyses the reaction D-sedoheptulose 7-phosphate + D-glyceraldehyde 3-phosphate = D-erythrose 4-phosphate + beta-D-fructose 6-phosphate. It functions in the pathway carbohydrate degradation; pentose phosphate pathway; D-glyceraldehyde 3-phosphate and beta-D-fructose 6-phosphate from D-ribose 5-phosphate and D-xylulose 5-phosphate (non-oxidative stage): step 2/3. Its function is as follows. Transaldolase is important for the balance of metabolites in the pentose-phosphate pathway. In Shewanella loihica (strain ATCC BAA-1088 / PV-4), this protein is Transaldolase.